Reading from the N-terminus, the 55-residue chain is Small ribosomal subunit protein eS31 (55 aa).

4 residues coordinate Zn(2+): Cys27, Cys30, Cys45, and Cys48. Residues Cys27–Cys48 form a C4-type zinc finger.

The protein belongs to the eukaryotic ribosomal protein eS31 family. Part of the 30S ribosomal subunit. Requires Zn(2+) as cofactor.

The sequence is that of Small ribosomal subunit protein eS31 from Cenarchaeum symbiosum (strain A).